The primary structure comprises 65 residues: Urease accessory protein UreI (65 aa).

Its function is as follows. Probably facilitates nickel incorporation. May constitute a multicomponent high-affinity nickel transporter. Not essential for the expression of catalytically active urease. The protein is Urease accessory protein UreI (ureI) of Bacillus sp. (strain TB-90).